A 369-amino-acid polypeptide reads, in one-letter code: Chorismate synthase (369 aa).

NADP(+)-binding residues include R48 and R54. FMN-binding positions include 125–127 (RSS), 238–239 (NA), G278, 293–297 (KPTSS), and R319.

This sequence belongs to the chorismate synthase family. Homotetramer. FMNH2 serves as cofactor.

The enzyme catalyses 5-O-(1-carboxyvinyl)-3-phosphoshikimate = chorismate + phosphate. The protein operates within metabolic intermediate biosynthesis; chorismate biosynthesis; chorismate from D-erythrose 4-phosphate and phosphoenolpyruvate: step 7/7. Its function is as follows. Catalyzes the anti-1,4-elimination of the C-3 phosphate and the C-6 proR hydrogen from 5-enolpyruvylshikimate-3-phosphate (EPSP) to yield chorismate, which is the branch point compound that serves as the starting substrate for the three terminal pathways of aromatic amino acid biosynthesis. This reaction introduces a second double bond into the aromatic ring system. The protein is Chorismate synthase of Nitrosococcus oceani (strain ATCC 19707 / BCRC 17464 / JCM 30415 / NCIMB 11848 / C-107).